The sequence spans 359 residues: Peptide chain release factor 1 (359 aa).

N5-methylglutamine is present on Q235.

It belongs to the prokaryotic/mitochondrial release factor family. Methylated by PrmC. Methylation increases the termination efficiency of RF1.

Its subcellular location is the cytoplasm. Functionally, peptide chain release factor 1 directs the termination of translation in response to the peptide chain termination codons UAG and UAA. The polypeptide is Peptide chain release factor 1 (Methylibium petroleiphilum (strain ATCC BAA-1232 / LMG 22953 / PM1)).